Consider the following 259-residue polypeptide: Flagellar L-ring protein (259 aa).

Residues 1–15 form the signal peptide; the sequence is MKRISLIALVTLMSG. A lipid anchor (N-palmitoyl cysteine) is attached at C16. C16 carries the S-diacylglycerol cysteine lipid modification.

It belongs to the FlgH family. As to quaternary structure, the basal body constitutes a major portion of the flagellar organelle and consists of four rings (L,P,S, and M) mounted on a central rod.

The protein localises to the cell outer membrane. It localises to the bacterial flagellum basal body. Its function is as follows. Assembles around the rod to form the L-ring and probably protects the motor/basal body from shearing forces during rotation. This Vibrio vulnificus (strain YJ016) protein is Flagellar L-ring protein.